The primary structure comprises 150 residues: Large ribosomal subunit protein bL9 (150 aa).

This sequence belongs to the bacterial ribosomal protein bL9 family.

In terms of biological role, binds to the 23S rRNA. This Ralstonia pickettii (strain 12J) protein is Large ribosomal subunit protein bL9.